Here is a 484-residue protein sequence, read N- to C-terminus: Probable cytochrome P450 555A1 (484 aa).

Residues 1 to 21 traverse the membrane as a helical segment; the sequence is MIIIVIVVFLFYFSFLNLNLN. Residue Cys432 participates in heme binding.

It belongs to the cytochrome P450 family. Requires heme as cofactor.

Its subcellular location is the membrane. This Dictyostelium discoideum (Social amoeba) protein is Probable cytochrome P450 555A1 (cyp555A1).